Here is a 608-residue protein sequence, read N- to C-terminus: Centromere DNA-binding protein complex CBF3 subunit B (608 aa).

Positions 14 to 42 (CSVCTRRKVKCDRMIPCGNCRKRGQDSEC) form a DNA-binding region, zn(2)-C6 fungal-type. The residue at position 575 (Ser-575) is a Phosphoserine.

As to quaternary structure, component of the CBF3 copmplex, which is formed of CBF3A/CBF2, CBF3B/CEP3, CBF3C/CTF13 and CBF3D.

Its subcellular location is the nucleus. The protein localises to the chromosome. It localises to the centromere. In terms of biological role, acts as a component of the centromere DNA-binding protein complex CBF3, which is essential for chromosome segregation and movement of centromeres along microtubules. CBF3 is required for the recruitment of other kinetochore complexes to CEN DNA. It plays a role in the attachment of chromosomes to the spindle and binds selectively to a highly conserved DNA sequence called CDEIII, found in centromers and in several promoters. The protein is Centromere DNA-binding protein complex CBF3 subunit B (CEP3) of Saccharomyces cerevisiae (strain ATCC 204508 / S288c) (Baker's yeast).